The chain runs to 327 residues: COP9 signalosome complex subunit 7 (327 aa).

The region spanning 4-165 (VHHRALDALQ…NPPTVNVTSV (162 aa)) is the PCI domain. Disordered stretches follow at residues 233-260 (GGEQ…AGWK) and 276-327 (GGSN…GKKS). Over residues 236–255 (QLQGGNPGQGQGQGQGGLGK) the composition is skewed to gly residues. The span at 315–327 (GARHSKRFLGKKS) shows a compositional bias: basic residues.

The protein belongs to the CSN7/EIF3M family. CSN7 subfamily. Component of the COP9 signalosome (CSN) complex. Present in uninduced vegetative hyphae, induced conidiating cultures and in both conidiospores and ascospores.

It localises to the cytoplasm. It is found in the nucleus. Its function is as follows. Component of the COP9 signalosome (CSN) complex that acts as an regulator of the ubiquitin (Ubl) conjugation pathway by mediating the deneddylation of the cullin subunit of SCF-type E3 ubiquitin-protein ligase complexes. The CSN complex seems to link protein degradation to sexual development. May be required for sporulation only at elevated temperatures. The sequence is that of COP9 signalosome complex subunit 7 (csnG) from Emericella nidulans (strain FGSC A4 / ATCC 38163 / CBS 112.46 / NRRL 194 / M139) (Aspergillus nidulans).